Here is a 138-residue protein sequence, read N- to C-terminus: Odorant-binding protein 22 (138 aa).

The N-terminal stretch at 1–16 (MKVFIAVFALIAVAAA) is a signal peptide. Residue arginine 30 participates in (5Z,8Z,11Z,14Z)-eicosatetraenoate binding. Residues arginine 30 and tyrosine 61 each contribute to the (9Z)-hexadecenoate site. (9Z,12Z)-octadecadienoate-binding residues include arginine 30 and tyrosine 61. 3 disulfides stabilise this stretch: cysteine 33/cysteine 64, cysteine 60/cysteine 113, and cysteine 103/cysteine 122. N-linked (GlcNAc...) asparagine glycosylation is present at asparagine 127.

The protein belongs to the PBP/GOBP family. As to quaternary structure, monomer in solution. High-level expression in female mouth parts, particularly in the proboscis (at protein level). Moderate-level expression in female antenna (at protein level). Expressed in testis but not in the accessory gland or ejaculatory duct (at protein level). Expressed in spermathecae (at protein level). Female salivary gland. Female chemosensory organs: antenna, palp and proboscis. Not detected in midgut.

It localises to the secreted. In terms of biological role, involved in modulation of blood-feeding behavior and capacity in female mosquitoes. Required for normal oviposition. Required for normal fecundity and fertility of female and male mosquitoes. Required for normal expression of VGA1 gene, which encodes the egg yolk protein vitellogenin-A1. Involved in regulation of spermatozoa development. Required for normal female longevity when mosquitoes are maintained on regular sugar meal. Binds long chain fatty acids. Functionally, (Microbial infection) Facilitates shedding of dengue virus type 2 particles into mosquito saliva. Does not affect dengue virus type 2 replication or infection prevalence in midgut and salivary glands at 14 days after blood feeding. Its function is as follows. (Microbial infection) Facilitates shedding of Zika virus particles into mosquito saliva. Does not affect Zika virus replication or infection prevalence in midgut and salivary glands at 14 days after blood feeding. This Aedes aegypti (Yellowfever mosquito) protein is Odorant-binding protein 22.